Here is a 321-residue protein sequence, read N- to C-terminus: Lipoyl synthase (321 aa).

Residues C68, C73, C79, C94, C98, C101, and S308 each contribute to the [4Fe-4S] cluster site. Residues 80–297 (FNHGTATFMI…KAEAMAMGFT (218 aa)) enclose the Radical SAM core domain.

The protein belongs to the radical SAM superfamily. Lipoyl synthase family. It depends on [4Fe-4S] cluster as a cofactor.

The protein localises to the cytoplasm. It carries out the reaction [[Fe-S] cluster scaffold protein carrying a second [4Fe-4S](2+) cluster] + N(6)-octanoyl-L-lysyl-[protein] + 2 oxidized [2Fe-2S]-[ferredoxin] + 2 S-adenosyl-L-methionine + 4 H(+) = [[Fe-S] cluster scaffold protein] + N(6)-[(R)-dihydrolipoyl]-L-lysyl-[protein] + 4 Fe(3+) + 2 hydrogen sulfide + 2 5'-deoxyadenosine + 2 L-methionine + 2 reduced [2Fe-2S]-[ferredoxin]. Its pathway is protein modification; protein lipoylation via endogenous pathway; protein N(6)-(lipoyl)lysine from octanoyl-[acyl-carrier-protein]: step 2/2. Its function is as follows. Catalyzes the radical-mediated insertion of two sulfur atoms into the C-6 and C-8 positions of the octanoyl moiety bound to the lipoyl domains of lipoate-dependent enzymes, thereby converting the octanoylated domains into lipoylated derivatives. This is Lipoyl synthase from Pectobacterium atrosepticum (strain SCRI 1043 / ATCC BAA-672) (Erwinia carotovora subsp. atroseptica).